We begin with the raw amino-acid sequence, 73 residues long: Long neurotoxin 1 (73 aa).

Intrachain disulfides connect C3–C21, C14–C42, C27–C31, C46–C57, and C58–C63.

This sequence belongs to the three-finger toxin family. Long-chain subfamily. Type II alpha-neurotoxin sub-subfamily. In terms of tissue distribution, expressed by the venom gland.

It localises to the secreted. Its function is as follows. Binds with high affinity to muscular (alpha-1/CHRNA1) and neuronal (alpha-7/CHRNA7) nicotinic acetylcholine receptor (nAChR) and inhibits acetylcholine from binding to the receptor, thereby impairing neuromuscular and neuronal transmission. The polypeptide is Long neurotoxin 1 (Ophiophagus hannah (King cobra)).